Consider the following 327-residue polypeptide: Phenylalanine--tRNA ligase alpha subunit (327 aa).

Glu-252 contributes to the Mg(2+) binding site.

Belongs to the class-II aminoacyl-tRNA synthetase family. Phe-tRNA synthetase alpha subunit type 1 subfamily. In terms of assembly, tetramer of two alpha and two beta subunits. It depends on Mg(2+) as a cofactor.

The protein localises to the cytoplasm. It carries out the reaction tRNA(Phe) + L-phenylalanine + ATP = L-phenylalanyl-tRNA(Phe) + AMP + diphosphate + H(+). The protein is Phenylalanine--tRNA ligase alpha subunit of Proteus mirabilis (strain HI4320).